The sequence spans 669 residues: DNA ligase (669 aa).

Residues Asp31–Asp35, Ser80–Leu81, and Glu112 contribute to the NAD(+) site. The active-site N6-AMP-lysine intermediate is Lys114. Arg135, Glu172, Lys289, and Lys313 together coordinate NAD(+). Zn(2+) is bound by residues Cys407, Cys410, Cys425, and Cys431. Residues Ser591–Asn669 enclose the BRCT domain.

Belongs to the NAD-dependent DNA ligase family. LigA subfamily. It depends on Mg(2+) as a cofactor. Mn(2+) is required as a cofactor.

The catalysed reaction is NAD(+) + (deoxyribonucleotide)n-3'-hydroxyl + 5'-phospho-(deoxyribonucleotide)m = (deoxyribonucleotide)n+m + AMP + beta-nicotinamide D-nucleotide.. DNA ligase that catalyzes the formation of phosphodiester linkages between 5'-phosphoryl and 3'-hydroxyl groups in double-stranded DNA using NAD as a coenzyme and as the energy source for the reaction. It is essential for DNA replication and repair of damaged DNA. This Aliivibrio salmonicida (strain LFI1238) (Vibrio salmonicida (strain LFI1238)) protein is DNA ligase.